The primary structure comprises 294 residues: 4-hydroxy-tetrahydrodipicolinate synthase (294 aa).

Residue T45 participates in pyruvate binding. Catalysis depends on Y133, which acts as the Proton donor/acceptor. The active-site Schiff-base intermediate with substrate is the K162. Position 204 (I204) interacts with pyruvate.

It belongs to the DapA family. Homotetramer; dimer of dimers.

It is found in the cytoplasm. It carries out the reaction L-aspartate 4-semialdehyde + pyruvate = (2S,4S)-4-hydroxy-2,3,4,5-tetrahydrodipicolinate + H2O + H(+). Its pathway is amino-acid biosynthesis; L-lysine biosynthesis via DAP pathway; (S)-tetrahydrodipicolinate from L-aspartate: step 3/4. In terms of biological role, catalyzes the condensation of (S)-aspartate-beta-semialdehyde [(S)-ASA] and pyruvate to 4-hydroxy-tetrahydrodipicolinate (HTPA). The sequence is that of 4-hydroxy-tetrahydrodipicolinate synthase from Bartonella henselae (strain ATCC 49882 / DSM 28221 / CCUG 30454 / Houston 1) (Rochalimaea henselae).